The following is a 175-amino-acid chain: Anterior gradient protein 2 homolog (175 aa).

A signal peptide spans 1-20; the sequence is MEKIPVSAFLLLVALSYTLA. Residues 21-40 form a required to promote cell adhesion region; that stretch reads RDTTVKPGAKKDTKDSRPKL. 2 consecutive short sequence motifs (homodimer stabilization; interchain) follow at residues 45–54 and 60–67; these read SRGWGDQLIW and EALYKSKT.

This sequence belongs to the AGR family. Monomer and homodimer. Interacts with LYPD3 and DAG1 (alphaDAG1). Interacts with MUC2; disulfide-linked. In terms of tissue distribution, expressed strongly in trachea, lung, stomach, colon, prostate and small intestine. Expressed weakly in pituitary gland, salivary gland, mammary gland, bladder, appendix, ovary, fetal lung, uterus, pancreas, kidney, fetal kidney, testis, placenta, thyroid gland and in estrogen receptor (ER)-positive breast cancer cell lines.

The protein resides in the secreted. The protein localises to the endoplasmic reticulum. Required for MUC2 post-transcriptional synthesis and secretion. May play a role in the production of mucus by intestinal cells. Proto-oncogene that may play a role in cell migration, cell differentiation and cell growth. Promotes cell adhesion. This chain is Anterior gradient protein 2 homolog (AGR2), found in Homo sapiens (Human).